A 438-amino-acid polypeptide reads, in one-letter code: Coenzyme A disulfide reductase (438 aa).

An FAD-binding site is contributed by glycine 8–glutamate 33. Substrate is bound by residues threonine 15, glutamine 19, arginine 22, serine 39, and asparagine 42. Cysteine 43 acts as the Nucleophile in catalysis. The Redox-active role is filled by cysteine 43. Lysine 71 contributes to the substrate binding site. Valine 151–asparagine 166 is a binding site for NADP(+). Threonine 267 to aspartate 277 serves as a coordination point for FAD. Position 299 (histidine 299) interacts with substrate. Tyrosine 419 is a binding site for FAD. Residue lysine 427 participates in substrate binding.

It belongs to the class-III pyridine nucleotide-disulfide oxidoreductase family. In terms of assembly, homodimer. Requires FAD as cofactor.

The catalysed reaction is NADP(+) + 2 CoA = CoA-disulfide + NADPH + H(+). Catalyzes specifically the NADPH-dependent reduction of coenzyme A disulfide. This Staphylococcus aureus (strain USA300) protein is Coenzyme A disulfide reductase.